Here is a 573-residue protein sequence, read N- to C-terminus: DEAD-box ATP-dependent RNA helicase 47B (573 aa).

The Q motif signature appears at 131-159; it reads KSFEELGLPPLLIDRLNKEGLSTPTEVQS. The 201-residue stretch at 162–362 folds into the Helicase ATP-binding domain; it reads IPIISQKHDA…RSWGHDPVLV (201 aa). ATP is bound at residue 175–182; the sequence is SYTGSGKT. The DEAD box motif lies at 293–296; the sequence is DEVD. In terms of domain architecture, Helicase C-terminal spans 421 to 565; sequence TLRRCIHALE…PCEFTEGKLL (145 aa).

It belongs to the DEAD box helicase family.

The enzyme catalyses ATP + H2O = ADP + phosphate + H(+). The chain is DEAD-box ATP-dependent RNA helicase 47B from Oryza sativa subsp. japonica (Rice).